Here is a 477-residue protein sequence, read N- to C-terminus: Bifunctional protein HldE (477 aa).

The tract at residues 1–320 is ribokinase; that stretch reads MKDSLPAFEK…SLSDTHHSET (320 aa). Residue 195–198 participates in ATP binding; sequence NLHE. Residue Asp264 is part of the active site. A cytidylyltransferase region spans residues 346–477; it reads MTNGCFDILH…KIIENIMANQ (132 aa).

This sequence in the N-terminal section; belongs to the carbohydrate kinase PfkB family. It in the C-terminal section; belongs to the cytidylyltransferase family. In terms of assembly, homodimer.

It carries out the reaction D-glycero-beta-D-manno-heptose 7-phosphate + ATP = D-glycero-beta-D-manno-heptose 1,7-bisphosphate + ADP + H(+). It catalyses the reaction D-glycero-beta-D-manno-heptose 1-phosphate + ATP + H(+) = ADP-D-glycero-beta-D-manno-heptose + diphosphate. Its pathway is nucleotide-sugar biosynthesis; ADP-L-glycero-beta-D-manno-heptose biosynthesis; ADP-L-glycero-beta-D-manno-heptose from D-glycero-beta-D-manno-heptose 7-phosphate: step 1/4. It functions in the pathway nucleotide-sugar biosynthesis; ADP-L-glycero-beta-D-manno-heptose biosynthesis; ADP-L-glycero-beta-D-manno-heptose from D-glycero-beta-D-manno-heptose 7-phosphate: step 3/4. Catalyzes the phosphorylation of D-glycero-D-manno-heptose 7-phosphate at the C-1 position to selectively form D-glycero-beta-D-manno-heptose-1,7-bisphosphate. In terms of biological role, catalyzes the ADP transfer from ATP to D-glycero-beta-D-manno-heptose 1-phosphate, yielding ADP-D-glycero-beta-D-manno-heptose. The sequence is that of Bifunctional protein HldE from Shewanella piezotolerans (strain WP3 / JCM 13877).